The following is a 215-amino-acid chain: Ribosomal RNA small subunit methyltransferase G (215 aa).

Residues glycine 78, leucine 83, 128–129 (AE), and arginine 146 each bind S-adenosyl-L-methionine.

This sequence belongs to the methyltransferase superfamily. RNA methyltransferase RsmG family.

The protein resides in the cytoplasm. It carries out the reaction guanosine(527) in 16S rRNA + S-adenosyl-L-methionine = N(7)-methylguanosine(527) in 16S rRNA + S-adenosyl-L-homocysteine. Specifically methylates the N7 position of guanine in position 527 of 16S rRNA. The sequence is that of Ribosomal RNA small subunit methyltransferase G from Anaeromyxobacter dehalogenans (strain 2CP-C).